Reading from the N-terminus, the 108-residue chain is Cell division topological specificity factor (108 aa).

Belongs to the MinE family.

Its function is as follows. Prevents the cell division inhibition by proteins MinC and MinD at internal division sites while permitting inhibition at polar sites. This ensures cell division at the proper site by restricting the formation of a division septum at the midpoint of the long axis of the cell. In Prochlorococcus marinus (strain MIT 9215), this protein is Cell division topological specificity factor.